The following is a 227-amino-acid chain: Cytochrome c oxidase subunit 2 (227 aa).

Over 1–14 (MAHAAQVGLQDATS) the chain is Mitochondrial intermembrane. Residues 15–45 (PIMEELVIFHDHALMIIFLICFLVLYALFLT) form a helical membrane-spanning segment. Residues 46 to 59 (LTTKLTNTSISDAQ) lie on the Mitochondrial matrix side of the membrane. A helical transmembrane segment spans residues 60–87 (EMETIWTILPAIILILIALPSLRILYLT). The Mitochondrial intermembrane segment spans residues 88 to 227 (DEINDPSFTI…IFEMGPVFTL (140 aa)). Cu cation-binding residues include His-161, Cys-196, Glu-198, Cys-200, His-204, and Met-207. Residue Glu-198 participates in Mg(2+) binding.

Belongs to the cytochrome c oxidase subunit 2 family. Component of the cytochrome c oxidase (complex IV, CIV), a multisubunit enzyme composed of 14 subunits. The complex is composed of a catalytic core of 3 subunits MT-CO1, MT-CO2 and MT-CO3, encoded in the mitochondrial DNA, and 11 supernumerary subunits COX4I, COX5A, COX5B, COX6A, COX6B, COX6C, COX7A, COX7B, COX7C, COX8 and NDUFA4, which are encoded in the nuclear genome. The complex exists as a monomer or a dimer and forms supercomplexes (SCs) in the inner mitochondrial membrane with NADH-ubiquinone oxidoreductase (complex I, CI) and ubiquinol-cytochrome c oxidoreductase (cytochrome b-c1 complex, complex III, CIII), resulting in different assemblies (supercomplex SCI(1)III(2)IV(1) and megacomplex MCI(2)III(2)IV(2)). Found in a complex with TMEM177, COA6, COX18, COX20, SCO1 and SCO2. Interacts with TMEM177 in a COX20-dependent manner. Interacts with COX20. Interacts with COX16. The cofactor is Cu cation.

The protein resides in the mitochondrion inner membrane. It catalyses the reaction 4 Fe(II)-[cytochrome c] + O2 + 8 H(+)(in) = 4 Fe(III)-[cytochrome c] + 2 H2O + 4 H(+)(out). Functionally, component of the cytochrome c oxidase, the last enzyme in the mitochondrial electron transport chain which drives oxidative phosphorylation. The respiratory chain contains 3 multisubunit complexes succinate dehydrogenase (complex II, CII), ubiquinol-cytochrome c oxidoreductase (cytochrome b-c1 complex, complex III, CIII) and cytochrome c oxidase (complex IV, CIV), that cooperate to transfer electrons derived from NADH and succinate to molecular oxygen, creating an electrochemical gradient over the inner membrane that drives transmembrane transport and the ATP synthase. Cytochrome c oxidase is the component of the respiratory chain that catalyzes the reduction of oxygen to water. Electrons originating from reduced cytochrome c in the intermembrane space (IMS) are transferred via the dinuclear copper A center (CU(A)) of subunit 2 and heme A of subunit 1 to the active site in subunit 1, a binuclear center (BNC) formed by heme A3 and copper B (CU(B)). The BNC reduces molecular oxygen to 2 water molecules using 4 electrons from cytochrome c in the IMS and 4 protons from the mitochondrial matrix. The polypeptide is Cytochrome c oxidase subunit 2 (MT-CO2) (Pongo abelii (Sumatran orangutan)).